A 333-amino-acid polypeptide reads, in one-letter code: Protein VTE6, chloroplastic (333 aa).

The transit peptide at M1 to A65 directs the protein to the chloroplast. 6 helical membrane-spanning segments follow: residues L94–A114, A126–T146, V171–G191, T248–I268, A274–F294, and V307–I327.

It belongs to the TMEM19 family.

It localises to the plastid. The protein resides in the chloroplast membrane. The catalysed reaction is phytyl phosphate + a ribonucleoside 5'-triphosphate = phytyl diphosphate + a ribonucleoside 5'-diphosphate. It catalyses the reaction phytyl phosphate + CTP = phytyl diphosphate + CDP. The protein operates within cofactor biosynthesis; tocopherol biosynthesis. Phytyl-phosphate kinase catalyzing the conversion of phytyl-monophosphate to phytyl-diphosphate. Involved in the activation and reutilization of phytol from chlorophyll degradation in plant metabolism, including tocopherol (vitamin E) biosynthesis. Involved in the biosynthesis of phylloquinone (vitamin K), which is required for the photosystem I (PSI) complex stability. The protein is Protein VTE6, chloroplastic of Arabidopsis thaliana (Mouse-ear cress).